A 367-amino-acid polypeptide reads, in one-letter code: MALEKEEEASQNGAFCVLDGLYCEEETGFVEDDLDDDGDLDFLEKSDESVVKFQFLPLLDMFLWDDDEILSLISKENETNPCFGEQILDGFLVSCRKEALDWVLRVKSHYGFTSLTAILAVNYFDRFMTSIKLQTDKPWMSQLVAVASLSLAAKVEEIQVPLLLDLQVEEARYLFEAKTIQRMELLILSTLQWRMHPVTPISFFDHIIRRFGSKWHQQLDFCRKCERLLISVIADTRFMRYFPSVLATAIMILVFEELKPCDEVEYQSQITTLLKVNQEKVNECYELLLEHNPSKKRMMNLVDQDSPSGVLDFDDSSNSSWNVSTTASVSSSSSSPEPLLKRRRVQEQQMRLPSINRMFLDVLSSPR.

Positions 324-335 (STTASVSSSSSS) are enriched in low complexity. Positions 324–347 (STTASVSSSSSSPEPLLKRRRVQE) are disordered.

Belongs to the cyclin family. Cyclin D subfamily. As to quaternary structure, interacts with CDKA-1. Expressed in developing vegetative and floral primordia.

In terms of biological role, promotes divisions in the guard cells (GCs) after the guard mother cells (GMC) symmetric division when in the presence of CDKA-1. The sequence is that of Cyclin-D3-2 (CYCD3-2) from Arabidopsis thaliana (Mouse-ear cress).